We begin with the raw amino-acid sequence, 568 residues long: Urease subunit alpha (568 aa).

The Urease domain maps to 132–568 (GAIDTHVHYI…LPLAQLYNLF (437 aa)). Residues His-137, His-139, and Lys-219 each coordinate Ni(2+). Lys-219 is modified (N6-carboxylysine). His-221 lines the substrate pocket. Ni(2+)-binding residues include His-248 and His-274. Catalysis depends on His-322, which acts as the Proton donor. Asp-362 serves as a coordination point for Ni(2+).

The protein belongs to the metallo-dependent hydrolases superfamily. Urease alpha subunit family. As to quaternary structure, heterotrimer of UreA (gamma), UreB (beta) and UreC (alpha) subunits. Three heterotrimers associate to form the active enzyme. Ni cation serves as cofactor. Post-translationally, carboxylation allows a single lysine to coordinate two nickel ions.

The protein localises to the cytoplasm. The enzyme catalyses urea + 2 H2O + H(+) = hydrogencarbonate + 2 NH4(+). It participates in nitrogen metabolism; urea degradation; CO(2) and NH(3) from urea (urease route): step 1/1. The chain is Urease subunit alpha from Azobacteroides pseudotrichonymphae genomovar. CFP2.